We begin with the raw amino-acid sequence, 285 residues long: Pantothenate synthetase (285 aa).

30-37 (MGNLHDGH) is an ATP binding site. Histidine 37 acts as the Proton donor in catalysis. Residue glutamine 61 coordinates (R)-pantoate. Residue glutamine 61 coordinates beta-alanine. Position 149–152 (149–152 (GEKD)) interacts with ATP. Glutamine 155 lines the (R)-pantoate pocket. ATP-binding positions include isoleucine 178 and 186 to 189 (FSSR).

The protein belongs to the pantothenate synthetase family. In terms of assembly, homodimer.

Its subcellular location is the cytoplasm. It catalyses the reaction (R)-pantoate + beta-alanine + ATP = (R)-pantothenate + AMP + diphosphate + H(+). Its pathway is cofactor biosynthesis; (R)-pantothenate biosynthesis; (R)-pantothenate from (R)-pantoate and beta-alanine: step 1/1. Catalyzes the condensation of pantoate with beta-alanine in an ATP-dependent reaction via a pantoyl-adenylate intermediate. This is Pantothenate synthetase from Buchnera aphidicola subsp. Schizaphis graminum (strain Sg).